We begin with the raw amino-acid sequence, 603 residues long: Methylenetetrahydrofolate reductase 1 (603 aa).

E21 serves as the catalytic Proton donor/acceptor. NAD(+) contacts are provided by residues 21-26 and 53-54; these read EFFPPK and TW. Residues 53–54, H82, 112–114, 130–131, Y153, and K173 each bind FAD; these read TW, RGD, and YA. Residue D114 participates in substrate binding. Substrate contacts are provided by Q184 and Y276. S355 bears the Phosphoserine mark.

The protein belongs to the methylenetetrahydrofolate reductase family. Requires FAD as cofactor.

The catalysed reaction is (6S)-5-methyl-5,6,7,8-tetrahydrofolate + NADP(+) = (6R)-5,10-methylene-5,6,7,8-tetrahydrofolate + NADPH + H(+). It catalyses the reaction (6S)-5-methyl-5,6,7,8-tetrahydrofolate + NAD(+) = (6R)-5,10-methylene-5,6,7,8-tetrahydrofolate + NADH + H(+). Its pathway is one-carbon metabolism; tetrahydrofolate interconversion. Functionally, major methylenetetrahydrofolate reductase required to generate the methyl groups necessary for methionine synthetase to convert homocysteine to methionine. Performs 80 to 85 percent of the total methylenetetrahydrofolate reductase activity of the cells. This Schizosaccharomyces pombe (strain 972 / ATCC 24843) (Fission yeast) protein is Methylenetetrahydrofolate reductase 1 (met9).